The following is a 284-amino-acid chain: Deoxyribonuclease-1 (284 aa).

Residues 1-22 (MRGARLMGALLALAGLLQGALA) form the signal peptide. N-linked (GlcNAc...) asparagine glycosylation occurs at asparagine 40. Residue glutamate 100 is part of the active site. Cysteines 123 and 126 form a disulfide. Asparagine 128 is a glycosylation site (N-linked (GlcNAc...) asparagine). Residue histidine 156 is part of the active site. Cysteine 195 and cysteine 231 form a disulfide bridge.

The protein belongs to the DNase I family. Requires Ca(2+) as cofactor. The cofactor is Mg(2+). As to expression, highest expression in pancreas.

The protein resides in the secreted. It is found in the zymogen granule. Its subcellular location is the nucleus envelope. The enzyme catalyses Endonucleolytic cleavage to 5'-phosphodinucleotide and 5'-phosphooligonucleotide end-products.. Its function is as follows. Serum endocuclease secreted into body fluids by a wide variety of exocrine and endocrine organs. Expressed by non-hematopoietic tissues and preferentially cleaves protein-free DNA. Among other functions, seems to be involved in cell death by apoptosis. Binds specifically to G-actin and blocks actin polymerization. Together with DNASE1L3, plays a key role in degrading neutrophil extracellular traps (NETs). NETs are mainly composed of DNA fibers and are released by neutrophils to bind pathogens during inflammation. Degradation of intravascular NETs by DNASE1 and DNASE1L3 is required to prevent formation of clots that obstruct blood vessels and cause organ damage following inflammation. The protein is Deoxyribonuclease-1 (DNASE1) of Canis lupus familiaris (Dog).